The chain runs to 269 residues: Phosphate import ATP-binding protein PstB 2 (269 aa).

Positions Leu22 to Val264 constitute an ABC transporter domain. Gly55–Ser62 is a binding site for ATP.

This sequence belongs to the ABC transporter superfamily. Phosphate importer (TC 3.A.1.7) family. As to quaternary structure, the complex is composed of two ATP-binding proteins (PstB), two transmembrane proteins (PstC and PstA) and a solute-binding protein (PstS).

The protein localises to the cell membrane. The catalysed reaction is phosphate(out) + ATP + H2O = ADP + 2 phosphate(in) + H(+). Functionally, part of the ABC transporter complex PstSACB involved in phosphate import. Responsible for energy coupling to the transport system. The sequence is that of Phosphate import ATP-binding protein PstB 2 from Lactococcus lactis subsp. lactis (strain IL1403) (Streptococcus lactis).